We begin with the raw amino-acid sequence, 415 residues long: Putative competence-damage inducible protein (415 aa).

The protein belongs to the CinA family.

In Listeria welshimeri serovar 6b (strain ATCC 35897 / DSM 20650 / CCUG 15529 / CIP 8149 / NCTC 11857 / SLCC 5334 / V8), this protein is Putative competence-damage inducible protein.